Here is a 342-residue protein sequence, read N- to C-terminus: Ribosomal RNA small subunit methyltransferase C (342 aa).

Belongs to the methyltransferase superfamily. RsmC family. In terms of assembly, monomer.

The protein resides in the cytoplasm. The catalysed reaction is guanosine(1207) in 16S rRNA + S-adenosyl-L-methionine = N(2)-methylguanosine(1207) in 16S rRNA + S-adenosyl-L-homocysteine + H(+). Functionally, specifically methylates the guanine in position 1207 of 16S rRNA in the 30S particle. The polypeptide is Ribosomal RNA small subunit methyltransferase C (Salmonella paratyphi B (strain ATCC BAA-1250 / SPB7)).